Consider the following 46-residue polypeptide: Protein PsbN (46 aa).

The chain crosses the membrane as a helical span at residues 7–27; it reads ALSVALGVMAVVLGLTGFGVY.

Belongs to the PsbN family.

Its subcellular location is the cellular thylakoid membrane. Its function is as follows. May play a role in photosystem I and II biogenesis. This chain is Protein PsbN, found in Synechococcus sp. (strain CC9902).